Reading from the N-terminus, the 240-residue chain is MORN repeat-containing protein 3 (240 aa).

The segment at 6–35 (CPKKSESLWKGWDRKAQKNGLRRQVYAVNG) is interaction with MDM2. MORN repeat units follow at residues 38–60 (YVGE…KNGA), 62–84 (YEGD…DQQT), 91–113 (YSGW…PKEY), 114–136 (YEGE…NGDI), 137–159 (YEGQ…NGNR), 160–182 (YEGC…DHGQ), and 184–205 (FEGF…GRDE). Residues 76 to 100 (TLSLPDQQTGKCRRVYSGWWKGDKK) are interaction with SIRT1. The interaction with TP53 stretch occupies residues 206–240 (APEPTQFPIPEVKILDPDGVLAQALAMFKKTEEGD).

Interacts with MEIG1. Interacts with TP53, MDM2 and SIRT1; the interactions mediate post-transcriptional modifications of TP53 by MDM2 and SIRT1.

It is found in the cytoplasmic vesicle. Its subcellular location is the secretory vesicle. The protein resides in the acrosome. In terms of biological role, assembles a suppression complex (suppresome) by tethering SIRT1 and MDM2 to regulate composite modifications of p53/TP53. Confers both deacetylation-mediated functional inactivation, by SIRT1, and ubiquitination-dependent degradation, by MDM2, of p53/TP53, promoting a proliferative and cell survival behaviors. May play a role in the regulation of spermatogenesis. In Macaca fascicularis (Crab-eating macaque), this protein is MORN repeat-containing protein 3 (MORN3).